A 366-amino-acid chain; its full sequence is Tyrosine--tRNA ligase (366 aa).

Y41, Y167, Q171, D174, and Q189 together coordinate L-tyrosine. A 'KMSKS' region motif is present at residues 241-245 (KMSKS). K244 provides a ligand contact to ATP.

It belongs to the class-I aminoacyl-tRNA synthetase family. TyrS type 4 subfamily. In terms of assembly, homodimer.

It localises to the cytoplasm. It carries out the reaction tRNA(Tyr) + L-tyrosine + ATP = L-tyrosyl-tRNA(Tyr) + AMP + diphosphate + H(+). In terms of biological role, catalyzes the attachment of tyrosine to tRNA(Tyr) in a two-step reaction: tyrosine is first activated by ATP to form Tyr-AMP and then transferred to the acceptor end of tRNA(Tyr). This is Tyrosine--tRNA ligase from Saccharolobus solfataricus (strain ATCC 35092 / DSM 1617 / JCM 11322 / P2) (Sulfolobus solfataricus).